A 471-amino-acid polypeptide reads, in one-letter code: Argininosuccinate lyase (471 aa).

It belongs to the lyase 1 family. Argininosuccinate lyase subfamily.

The protein resides in the cytoplasm. It carries out the reaction 2-(N(omega)-L-arginino)succinate = fumarate + L-arginine. It participates in amino-acid biosynthesis; L-arginine biosynthesis; L-arginine from L-ornithine and carbamoyl phosphate: step 3/3. The chain is Argininosuccinate lyase from Renibacterium salmoninarum (strain ATCC 33209 / DSM 20767 / JCM 11484 / NBRC 15589 / NCIMB 2235).